Here is a 423-residue protein sequence, read N- to C-terminus: Histidine--tRNA ligase (423 aa).

This sequence belongs to the class-II aminoacyl-tRNA synthetase family. Homodimer.

The protein localises to the cytoplasm. The enzyme catalyses tRNA(His) + L-histidine + ATP = L-histidyl-tRNA(His) + AMP + diphosphate + H(+). The chain is Histidine--tRNA ligase from Halorhodospira halophila (strain DSM 244 / SL1) (Ectothiorhodospira halophila (strain DSM 244 / SL1)).